The following is a 104-amino-acid chain: DNA-directed RNA polymerase subunit Rpo13 (104 aa).

Disordered regions lie at residues Met-1–Pro-34 and Glu-76–Gly-104. Over residues Thr-7–Glu-31 the composition is skewed to acidic residues. Glu-32 contacts DNA. The segment covering Ser-80–Gly-104 has biased composition (basic residues). The interval Arg-81–Gly-104 is required to bind DNA.

Belongs to the archaeal Rpo13 RNA polymerase subunit family. Part of the 13-subunit RNA polymerase complex. Rpo1N and Rpo5 form a cleft which docks Rpo13. Forms predominantly dimers in solution, although monomers and trimers can also be seen. Found associated with RNAP but also as a homodimer pool in the cytoplasm in vivo.

The protein resides in the cytoplasm. The catalysed reaction is RNA(n) + a ribonucleoside 5'-triphosphate = RNA(n+1) + diphosphate. Functionally, DNA-dependent RNA polymerase (RNAP) catalyzes the transcription of DNA into RNA using the four ribonucleoside triphosphates as substrates. A molten-globule protein, it binds dsDNA in the RNAP, in vitro binds dsDNA but not ssDNA. Its position in RNAP implies it functions in both transcription initiation and elongation. The protein is DNA-directed RNA polymerase subunit Rpo13 of Saccharolobus shibatae (strain ATCC 51178 / DSM 5389 / JCM 8931 / NBRC 15437 / B12) (Sulfolobus shibatae).